The sequence spans 1184 residues: uncharacterized protein (1184 aa).

2 disordered regions span residues 115 to 152 (ETSS…AHVS) and 397 to 426 (TYKP…VPER). 2 stretches are compositionally biased toward polar residues: residues 137 to 152 (HVMN…AHVS) and 397 to 421 (TYKP…TSHN). A Phosphoserine modification is found at serine 686. Composition is skewed to basic and acidic residues over residues 705 to 767 (LSER…ESAH), 783 to 792 (FEHETEPSHY), 849 to 863 (SHAH…RDLG), and 891 to 902 (YLHDEKTRDTLT). Disordered regions lie at residues 705 to 870 (LSER…FGDV) and 890 to 1017 (DYLH…SSPK). A Phosphoserine modification is found at serine 905. Positions 920–932 (EDHPHASEAERAH) are enriched in basic and acidic residues. The segment covering 941-950 (SSESSPESQS) has biased composition (low complexity). A compositionally biased stretch (basic and acidic residues) spans 999–1011 (PRERLDDNAKEIL). The residue at position 1018 (serine 1018) is a Phosphoserine. 2 disordered regions span residues 1029 to 1107 (NRKD…IGTQ) and 1135 to 1154 (DVDN…KSRP). Over residues 1032–1045 (DKAAVKRMLEEDSS) the composition is skewed to basic and acidic residues. Residues 1073 to 1107 (PAVNNSTKPVAVTSKNGHSRNGSHAAHSNNVIGTQ) show a composition bias toward polar residues. Residues 1138 to 1150 (NVVSGHSNVNGVS) show a composition bias toward low complexity.

Its subcellular location is the cytoplasm. This is an uncharacterized protein from Schizosaccharomyces pombe (strain 972 / ATCC 24843) (Fission yeast).